Consider the following 75-residue polypeptide: Signaling peptide TAXIMIN 1 (75 aa).

A signal peptide spans 1–29 (MCDGDCRPLGFLLGLPFAFLSLLLSIIGV).

Expressed in shoot apical meristems (SAM); mostly specific to the L1 layer in the center of the meristem but also detected in the L2 layer in organ primordia. Also observed in the vasculature of seedling roots.

Its subcellular location is the secreted. Counteracted by the antibiotic cefotaxime during responses to light stress. In terms of biological role, signaling peptide involved in the regulation of lateral organs separation, including fruits and leaves. Involved in the perception of and response to light stress via the control of sinapoyl-malate accumulation, a UV-B protecting compound. In Arabidopsis thaliana (Mouse-ear cress), this protein is Signaling peptide TAXIMIN 1.